Consider the following 401-residue polypeptide: SVP1-like protein 2 (401 aa).

2 WD repeats span residues 222–262 and 267–306; these read AHKN…LIHE and LDRALIYDMQWNGKGDKLAVVSDKFTLHIFQINEDLDKRH.

It belongs to the WD repeat PROPPIN family.

The protein resides in the vacuole membrane. Its subcellular location is the cytoplasmic vesicle membrane. Its function is as follows. Involved in mitochondrial or peroxisomal functions and amino acid signaling pathways. This is SVP1-like protein 2 (HSV2) from Eremothecium gossypii (strain ATCC 10895 / CBS 109.51 / FGSC 9923 / NRRL Y-1056) (Yeast).